The primary structure comprises 146 residues: Actin-depolymerizing factor 6 (146 aa).

S13 bears the Phosphoserine mark. Residues 14 to 146 enclose the ADF-H domain; the sequence is GMGVADESKT…DLEVLRERAN (133 aa).

Belongs to the actin-binding proteins ADF family. Post-translationally, phosphorylated. In terms of tissue distribution, expressed in vascular tissues of all organs.

Its subcellular location is the cytoplasm. It is found in the cytoskeleton. Functionally, actin-depolymerizing protein. Severs actin filaments (F-actin) and binds to actin monomers. This is Actin-depolymerizing factor 6 (ADF6) from Arabidopsis thaliana (Mouse-ear cress).